A 297-amino-acid chain; its full sequence is Bifunctional protein FolD 2 (297 aa).

NADP(+) is bound by residues 177–179, isoleucine 202, and isoleucine 243; that span reads GKS.

It belongs to the tetrahydrofolate dehydrogenase/cyclohydrolase family. Homodimer.

The catalysed reaction is (6R)-5,10-methylene-5,6,7,8-tetrahydrofolate + NADP(+) = (6R)-5,10-methenyltetrahydrofolate + NADPH. It catalyses the reaction (6R)-5,10-methenyltetrahydrofolate + H2O = (6R)-10-formyltetrahydrofolate + H(+). Its pathway is one-carbon metabolism; tetrahydrofolate interconversion. Its function is as follows. Catalyzes the oxidation of 5,10-methylenetetrahydrofolate to 5,10-methenyltetrahydrofolate and then the hydrolysis of 5,10-methenyltetrahydrofolate to 10-formyltetrahydrofolate. The sequence is that of Bifunctional protein FolD 2 from Rhizorhabdus wittichii (strain DSM 6014 / CCUG 31198 / JCM 15750 / NBRC 105917 / EY 4224 / RW1) (Sphingomonas wittichii).